Here is a 121-residue protein sequence, read N- to C-terminus: Ribonuclease P protein component (121 aa).

This sequence belongs to the RnpA family. In terms of assembly, consists of a catalytic RNA component (M1 or rnpB) and a protein subunit.

It catalyses the reaction Endonucleolytic cleavage of RNA, removing 5'-extranucleotides from tRNA precursor.. In terms of biological role, RNaseP catalyzes the removal of the 5'-leader sequence from pre-tRNA to produce the mature 5'-terminus. It can also cleave other RNA substrates such as 4.5S RNA. The protein component plays an auxiliary but essential role in vivo by binding to the 5'-leader sequence and broadening the substrate specificity of the ribozyme. The sequence is that of Ribonuclease P protein component from Geobacillus thermodenitrificans (strain NG80-2).